A 586-amino-acid polypeptide reads, in one-letter code: MSLSTHIRDYVEVLTGVTEASGNPLQLAKLISESLLYVLKICQSEVLQILSFQWIRNFSLLPIKIPAIYESIIGQTPPEALFDFVEVLHLGQNPVIAGFLNSAFFALPFSAIHFVSIRRLLTQGVPAAIYSFGGYIIGQILFMSCVIFGVQDIIIPWLTLEPLNYIAGLILLSRIIISMRFESLAELETWDHPKYKNYFIYRFLIAWCEQGSIFQFLSNITPSANPTILQGFAFNNLGLNLVQNFSYIGGLLLGSAAFTLFWMWLFLKIQTYILVHTLYYHHQIVATVNQICFLSALTLSFATLPYYAYNYLLVGPLGFVPEDNALLSTVFTHSYLKDGPKELSFLTEEPIMELKLFPFNKGQYLIFPELYQTLSLEELSYRADYAWVRRVEKFSLDVTATHVGGRKLARRLGFHKLRQSFAKLILPRQTLAMDYRLELNSKYKCEDHDADIKAILDSELTNTRKESSIRGRRYRGDLSYDPTLDRFYQWYDFENVSLESSDQMMNYVTRTSVQGRFLFPQSFIKKEINLGEIHHEIGLRIKQQYNQSLIFRTLLKVDISFLLARQPKKHHLSGDQECDLQIKRNI.

6 helical membrane-spanning segments follow: residues 95 to 115, 129 to 151, 155 to 177, 198 to 217, 247 to 267, and 284 to 304; these read VIAG…IHFV, IYSF…FGVQ, IPWL…RIII, YFIY…FQFL, YIGG…WLFL, and IVAT…FATL.

The protein belongs to the ycf78 family.

The protein localises to the plastid membrane. This is an uncharacterized protein from Prototheca wickerhamii.